The sequence spans 221 residues: Transcription factor otaR1 (221 aa).

The segment at 109 to 146 (ASRSRPAFSTPASRPGLSSAKSPSLGATSPGSMDRSEE) is disordered. A compositionally biased stretch (polar residues) spans 127 to 139 (SAKSPSLGATSPG). The basic motif stretch occupies residues 152–192 (KKYHEKYKERNRLAAGRSRQKQADLINLLQAEQQEEERRRK). In terms of domain architecture, bZIP spans 152–215 (KKYHEKYKER…VDMKQELQHH (64 aa)). The leucine-zipper stretch occupies residues 198–212 (IANMQKELVDMKQEL).

The protein localises to the nucleus. Transcription factor; part of the gene cluster that mediates the biosynthesis of ochratoxin A (OTA), a mycotoxin demonstrated to have nephrotoxic, immunotoxic, genotoxic, neurotoxic, and teratogenic properties. Positively regulates the expression of the OTA biosynthetic genes and subsequent production of OTA. Probably binds to conserved 5'-ACGT-3' bZIP binding motifs found in multiple copies (3 to 4) in the promoters of the OTA biosynthetic genes. Acts not only as a pathway-specific regulator of the OTA cluster but also binds at other chromosomal positions outside the OTA cluster and can act as a broad regulator. Negatively regulates pathogenicity and plays a critical role in tolerance to reactive oxygen species (ROS). The protein is Transcription factor otaR1 of Aspergillus niger (strain ATCC MYA-4892 / CBS 513.88 / FGSC A1513).